The primary structure comprises 444 residues: Adenylosuccinate synthetase (444 aa).

Residues 13-19 and 41-43 contribute to the GTP site; these read GDEGKGK and GHT. Catalysis depends on Asp14, which acts as the Proton acceptor. Mg(2+) is bound by residues Asp14 and Gly41. Residues 14–17, 39–42, Thr129, Arg143, Gln224, Thr239, and Arg303 contribute to the IMP site; these read DEGK and NAGH. Catalysis depends on His42, which acts as the Proton donor. 299-305 contributes to the substrate binding site; that stretch reads TTTGRRR. GTP is bound by residues Arg305, 331 to 333, and 413 to 415; these read KLD and SLG.

This sequence belongs to the adenylosuccinate synthetase family. In terms of assembly, homodimer. Mg(2+) is required as a cofactor.

The protein localises to the cytoplasm. The enzyme catalyses IMP + L-aspartate + GTP = N(6)-(1,2-dicarboxyethyl)-AMP + GDP + phosphate + 2 H(+). It participates in purine metabolism; AMP biosynthesis via de novo pathway; AMP from IMP: step 1/2. In terms of biological role, plays an important role in the de novo pathway of purine nucleotide biosynthesis. Catalyzes the first committed step in the biosynthesis of AMP from IMP. This chain is Adenylosuccinate synthetase, found in Synechocystis sp. (strain ATCC 27184 / PCC 6803 / Kazusa).